Here is a 397-residue protein sequence, read N- to C-terminus: Elongation factor Tu (397 aa).

The region spanning 10 to 207 (KPHVNVGTVG…AIDAYVPDPV (198 aa)) is the tr-type G domain. The interval 19-26 (GHIDHGKT) is G1. 19–26 (GHIDHGKT) contacts GTP. Thr26 provides a ligand contact to Mg(2+). A G2 region spans residues 60–64 (GITIA). Positions 81-84 (DCPG) are G3. Residues 81–85 (DCPGH) and 136–139 (NKVD) each bind GTP. The tract at residues 136–139 (NKVD) is G4. A G5 region spans residues 174-176 (SAL).

Belongs to the TRAFAC class translation factor GTPase superfamily. Classic translation factor GTPase family. EF-Tu/EF-1A subfamily. Monomer.

The protein localises to the cytoplasm. It carries out the reaction GTP + H2O = GDP + phosphate + H(+). Its function is as follows. GTP hydrolase that promotes the GTP-dependent binding of aminoacyl-tRNA to the A-site of ribosomes during protein biosynthesis. The polypeptide is Elongation factor Tu (Syntrophobacter fumaroxidans (strain DSM 10017 / MPOB)).